A 166-amino-acid polypeptide reads, in one-letter code: Apoptosis regulator M11L (166 aa).

A helical transmembrane segment spans residues 138–160; that stretch reads SGGCKISVYLTAAVVGFVAYGIL.

As to quaternary structure, interacts with host BAX; this interaction inhibits apoptosis activation. Interacts with host BAK1.

It is found in the host mitochondrion. It localises to the host membrane. Functionally, plays a role in the inhibition of mitochondria-mediated apoptosis by blocking the activation of mitochondria-tranlocalized BAX thereby maintaining pro-apoptotic BAX in an inactive conformation. Also inhibits apoptosis in a BAX-independent manner by interacting with and inhibiting host BAK1. In Myxoma virus (strain Lausanne) (MYXV), this protein is Apoptosis regulator M11L (m011L).